A 74-amino-acid polypeptide reads, in one-letter code: Pelophylaxin-2 (74 aa).

A signal peptide spans 1–22; sequence MFTMKKSLLFFFFLGTIALSLC. A propeptide spanning residues 23–42 is cleaved from the precursor; it reads EEERGADEEENGAEITDEEV. The cysteines at positions 68 and 74 are disulfide-linked.

In terms of tissue distribution, expressed by the skin glands.

It is found in the secreted. Antimicrobial peptide. In Pelophylax fukienensis (Fukien gold-striped pond frog), this protein is Pelophylaxin-2.